Consider the following 542-residue polypeptide: Chaperonin GroEL (542 aa).

Residues 29-32 (TLGP), 86-90 (DGTTT), G413, 476-478 (NAA), and D492 each bind ATP.

It belongs to the chaperonin (HSP60) family. Forms a cylinder of 14 subunits composed of two heptameric rings stacked back-to-back. Interacts with the co-chaperonin GroES.

It is found in the cytoplasm. The enzyme catalyses ATP + H2O + a folded polypeptide = ADP + phosphate + an unfolded polypeptide.. Functionally, together with its co-chaperonin GroES, plays an essential role in assisting protein folding. The GroEL-GroES system forms a nano-cage that allows encapsulation of the non-native substrate proteins and provides a physical environment optimized to promote and accelerate protein folding. In Lactococcus lactis subsp. cremoris (strain SK11), this protein is Chaperonin GroEL.